Here is a 165-residue protein sequence, read N- to C-terminus: Chorismate pyruvate-lyase (165 aa).

The substrate site is built by Met-35, Arg-77, Leu-115, and Glu-156.

It belongs to the UbiC family. Monomer.

Its subcellular location is the cytoplasm. The enzyme catalyses chorismate = 4-hydroxybenzoate + pyruvate. Its pathway is cofactor biosynthesis; ubiquinone biosynthesis. Removes the pyruvyl group from chorismate, with concomitant aromatization of the ring, to provide 4-hydroxybenzoate (4HB) for the ubiquinone pathway. This chain is Chorismate pyruvate-lyase, found in Salmonella enteritidis PT4 (strain P125109).